The chain runs to 335 residues: UPF0353 protein MUL_1490 (335 aa).

Transmembrane regions (helical) follow at residues 18–38 and 67–87; these read WFFLFLLVVAGLIAIYVVLQL and IPAMLLALSLVLFTVAMAGPT. The 201-residue stretch at 98–298 folds into the VWFA domain; it reads VVMLVIDVSQ…SVYVSLQQQI (201 aa). A helical transmembrane segment spans residues 309–329; sequence MGWLRLGALVLVAAALAALLI.

Belongs to the UPF0353 family.

It localises to the cell membrane. This Mycobacterium ulcerans (strain Agy99) protein is UPF0353 protein MUL_1490.